The chain runs to 271 residues: MPELPEVETTLRGLSPHLVGQRIHGVILRRPDLRWPIPEQIERLLPGATITNVRRRAKYLLIDTDAGGSVLLHLGMSGSLRVLPGDTLPRAHDHVDISLQSGRLLRFNDPRRFGCLLWQSGTQAHDLLAALGPEPLSDAFTGDYLHALAQGRRAAVKTFLMDQAVVVGVGNIYAAESLHRAGISPLREAGKVSLERYRRLADAVKDILAYAIQRGGTTLRDFISPDGAPGYFEQELFVYGREGEACKQCGRVLKHATIGQRATVWCGSCQR.

P2 acts as the Schiff-base intermediate with DNA in catalysis. E3 functions as the Proton donor in the catalytic mechanism. K58 serves as the catalytic Proton donor; for beta-elimination activity. H92, R111, and R152 together coordinate DNA. The FPG-type zinc-finger motif lies at 237–271; that stretch reads FVYGREGEACKQCGRVLKHATIGQRATVWCGSCQR. The active-site Proton donor; for delta-elimination activity is R261.

The protein belongs to the FPG family. Monomer. It depends on Zn(2+) as a cofactor.

The enzyme catalyses Hydrolysis of DNA containing ring-opened 7-methylguanine residues, releasing 2,6-diamino-4-hydroxy-5-(N-methyl)formamidopyrimidine.. The catalysed reaction is 2'-deoxyribonucleotide-(2'-deoxyribose 5'-phosphate)-2'-deoxyribonucleotide-DNA = a 3'-end 2'-deoxyribonucleotide-(2,3-dehydro-2,3-deoxyribose 5'-phosphate)-DNA + a 5'-end 5'-phospho-2'-deoxyribonucleoside-DNA + H(+). In terms of biological role, involved in base excision repair of DNA damaged by oxidation or by mutagenic agents. Acts as a DNA glycosylase that recognizes and removes damaged bases. Has a preference for oxidized purines, such as 7,8-dihydro-8-oxoguanine (8-oxoG). Has AP (apurinic/apyrimidinic) lyase activity and introduces nicks in the DNA strand. Cleaves the DNA backbone by beta-delta elimination to generate a single-strand break at the site of the removed base with both 3'- and 5'-phosphates. In Xanthomonas axonopodis pv. citri (strain 306), this protein is Formamidopyrimidine-DNA glycosylase.